Reading from the N-terminus, the 226-residue chain is Urease accessory protein UreF (226 aa).

It belongs to the UreF family. In terms of assembly, ureD, UreF and UreG form a complex that acts as a GTP-hydrolysis-dependent molecular chaperone, activating the urease apoprotein by helping to assemble the nickel containing metallocenter of UreC. The UreE protein probably delivers the nickel.

Its subcellular location is the cytoplasm. Functionally, required for maturation of urease via the functional incorporation of the urease nickel metallocenter. The chain is Urease accessory protein UreF from Janthinobacterium sp. (strain Marseille) (Minibacterium massiliensis).